The sequence spans 209 residues: Uracil phosphoribosyltransferase (209 aa).

Residues Arg-79, Arg-104, and 131–139 (DPMLATGGS) contribute to the 5-phospho-alpha-D-ribose 1-diphosphate site. Residues Ile-194 and 199-201 (GDA) contribute to the uracil site. 5-phospho-alpha-D-ribose 1-diphosphate is bound at residue Asp-200.

This sequence belongs to the UPRTase family. It depends on Mg(2+) as a cofactor.

The enzyme catalyses UMP + diphosphate = 5-phospho-alpha-D-ribose 1-diphosphate + uracil. Its pathway is pyrimidine metabolism; UMP biosynthesis via salvage pathway; UMP from uracil: step 1/1. With respect to regulation, allosterically activated by GTP. In terms of biological role, catalyzes the conversion of uracil and 5-phospho-alpha-D-ribose 1-diphosphate (PRPP) to UMP and diphosphate. This is Uracil phosphoribosyltransferase from Streptococcus pyogenes serotype M49 (strain NZ131).